The sequence spans 280 residues: Pantothenate synthetase (280 aa).

26–33 (MGNLHEGH) is an ATP binding site. The active-site Proton donor is His33. A (R)-pantoate-binding site is contributed by Gln57. Residue Gln57 participates in beta-alanine binding. 145-148 (GKKD) is a binding site for ATP. A (R)-pantoate-binding site is contributed by Gln151. ATP is bound by residues Val174 and 182-185 (LSSR).

It belongs to the pantothenate synthetase family. In terms of assembly, homodimer.

The protein localises to the cytoplasm. It carries out the reaction (R)-pantoate + beta-alanine + ATP = (R)-pantothenate + AMP + diphosphate + H(+). Its pathway is cofactor biosynthesis; (R)-pantothenate biosynthesis; (R)-pantothenate from (R)-pantoate and beta-alanine: step 1/1. In terms of biological role, catalyzes the condensation of pantoate with beta-alanine in an ATP-dependent reaction via a pantoyl-adenylate intermediate. This Bordetella bronchiseptica (strain ATCC BAA-588 / NCTC 13252 / RB50) (Alcaligenes bronchisepticus) protein is Pantothenate synthetase.